A 271-amino-acid polypeptide reads, in one-letter code: Phosphonoacetaldehyde hydrolase (271 aa).

Asp12 functions as the Nucleophile in the catalytic mechanism. 2 residues coordinate Mg(2+): Asp12 and Ala14. Lys54 serves as the catalytic Schiff-base intermediate with substrate. Mg(2+) is bound at residue Asp188.

It belongs to the HAD-like hydrolase superfamily. PhnX family. Homodimer. It depends on Mg(2+) as a cofactor.

The enzyme catalyses phosphonoacetaldehyde + H2O = acetaldehyde + phosphate + H(+). In terms of biological role, involved in phosphonate degradation. This chain is Phosphonoacetaldehyde hydrolase, found in Vibrio campbellii (strain ATCC BAA-1116).